Reading from the N-terminus, the 76-residue chain is Alpha/kappa-conotoxin-like pl14.3 (76 aa).

Residues 1–27 (MPSVRSVACCCLLWMMLSVQLVTPGSP) form the signal peptide. A propeptide spanning residues 28 to 39 (ATAQLSGQRTAR) is cleaved from the precursor. Cystine bridges form between C46-C61 and C50-C63. Residue D64 is modified to Aspartic acid 1-amide. Residues 65-76 (GKRDVVSSSMAV) constitute a propeptide that is removed on maturation.

The protein belongs to the conotoxin J superfamily. Expressed by the venom duct.

It is found in the secreted. Functionally, highly inhibits both nicotinic acetylcholine receptors (neuronal (alpha-3/beta-4) and muscular (alpha-1/beta-1/epsilon/delta) subtypes) and the voltage-gated potassium channel Kv1.6/KCNA6 subtype. The sequence is that of Alpha/kappa-conotoxin-like pl14.3 from Conus planorbis (Planorbis cone).